Reading from the N-terminus, the 1407-residue chain is JmjC domain-containing histone demethylation protein 1 (1407 aa).

Disordered regions lie at residues 1–86 (MISA…SSTI) and 98–151 (PTFT…NAFS). 2 stretches are compositionally biased toward basic and acidic residues: residues 55–67 (DHVR…KRPS) and 125–140 (PVER…RDES). Positions 141–150 (SYTQHRSNAF) are enriched in polar residues. The segment at 323–382 (QASCATCNLVRIPVDNEDQDVTWISCDGCKRWFHIVCAGFKNDRETRTVDKFICKTCRPI) adopts a PHD-type zinc-finger fold. In terms of domain architecture, JmjC spans 577 to 735 (VSQSKLGRLI…MQIKIAKIEK (159 aa)). Thr628 contributes to the substrate binding site. 2 residues coordinate Fe cation: His631 and Asp633. Lys648 provides a ligand contact to substrate. His703 contacts Fe cation. 4 disordered regions span residues 893 to 987 (KLSL…LGPK), 1004 to 1027 (KEEN…HHTP), 1122 to 1183 (IKAQ…QDSV), and 1252 to 1389 (DEMD…SLRL). Composition is skewed to basic and acidic residues over residues 896–914 (LAEK…RNAD) and 928–938 (LSERPAVDIQK). The segment covering 1008 to 1027 (NGASGSQMTVSTSSLGHHTP) has biased composition (polar residues). The segment covering 1254-1264 (MDIHDQVDAGG) has biased composition (basic and acidic residues). The segment covering 1273-1284 (PSSGSRQSSRQP) has biased composition (low complexity). Over residues 1285 to 1296 (RQVERYMPEVHF) the composition is skewed to basic and acidic residues. Over residues 1297–1349 (AKTAKSTTTTPQTTRRSSFGSSGRKTTPGLSSGSKKSGSRPSSSHGKKSLSPS) the composition is skewed to low complexity.

It belongs to the JHDM1 histone demethylase family. The cofactor is Fe(2+).

The protein localises to the nucleus. The enzyme catalyses N(6),N(6)-dimethyl-L-lysyl(36)-[histone H3] + 2 2-oxoglutarate + 2 O2 = L-lysyl(36)-[histone H3] + 2 formaldehyde + 2 succinate + 2 CO2. Functionally, histone demethylase that specifically demethylates 'Lys-36' of histone H3, thereby playing a central role in histone code. The chain is JmjC domain-containing histone demethylation protein 1 (jhd1) from Emericella nidulans (strain FGSC A4 / ATCC 38163 / CBS 112.46 / NRRL 194 / M139) (Aspergillus nidulans).